Here is a 144-residue protein sequence, read N- to C-terminus: uncharacterized protein (144 aa).

The 58-residue stretch at 1 to 58 (MDLASLNAFIAVAETGSFSEAGERLHLTQPAVSKRIAALEQQLQVRLFDRLGREVRLT) folds into the HTH lysR-type domain. Positions 18–38 (FSEAGERLHLTQPAVSKRIAA) form a DNA-binding region, H-T-H motif.

It belongs to the LysR transcriptional regulatory family.

This is an uncharacterized protein from Azotobacter vinelandii.